A 201-amino-acid chain; its full sequence is 3-isopropylmalate dehydratase small subunit (201 aa).

The protein belongs to the LeuD family. LeuD type 1 subfamily. In terms of assembly, heterodimer of LeuC and LeuD.

The catalysed reaction is (2R,3S)-3-isopropylmalate = (2S)-2-isopropylmalate. It functions in the pathway amino-acid biosynthesis; L-leucine biosynthesis; L-leucine from 3-methyl-2-oxobutanoate: step 2/4. Catalyzes the isomerization between 2-isopropylmalate and 3-isopropylmalate, via the formation of 2-isopropylmaleate. This chain is 3-isopropylmalate dehydratase small subunit, found in Erwinia tasmaniensis (strain DSM 17950 / CFBP 7177 / CIP 109463 / NCPPB 4357 / Et1/99).